The following is a 630-amino-acid chain: Phosphomethylpyrimidine synthase (630 aa).

2 disordered regions span residues 1–22 (MADI…TTGP) and 97–120 (AQRE…VPAF). Substrate is bound by residues Asn224, Met253, Tyr282, His318, 338–340 (SRG), 379–382 (DGLR), and Glu418. His422 contributes to the Zn(2+) binding site. Tyr445 contacts substrate. Zn(2+) is bound at residue His486. 3 residues coordinate [4Fe-4S] cluster: Cys566, Cys569, and Cys574.

Belongs to the ThiC family. Homodimer. [4Fe-4S] cluster is required as a cofactor.

It catalyses the reaction 5-amino-1-(5-phospho-beta-D-ribosyl)imidazole + S-adenosyl-L-methionine = 4-amino-2-methyl-5-(phosphooxymethyl)pyrimidine + CO + 5'-deoxyadenosine + formate + L-methionine + 3 H(+). It participates in cofactor biosynthesis; thiamine diphosphate biosynthesis. Catalyzes the synthesis of the hydroxymethylpyrimidine phosphate (HMP-P) moiety of thiamine from aminoimidazole ribotide (AIR) in a radical S-adenosyl-L-methionine (SAM)-dependent reaction. The sequence is that of Phosphomethylpyrimidine synthase from Sphingopyxis alaskensis (strain DSM 13593 / LMG 18877 / RB2256) (Sphingomonas alaskensis).